The sequence spans 736 residues: Catalase-peroxidase (736 aa).

The N-terminal stretch at 1–21 (MFKKTILSFVISAVMVTAASA) is a signal peptide. Residues 102 to 224 (WHAAGTYRTH…LAAVEMGLIY (123 aa)) constitute a cross-link (tryptophyl-tyrosyl-methioninium (Trp-Tyr) (with M-250)). The active-site Proton acceptor is the histidine 103. The tryptophyl-tyrosyl-methioninium (Tyr-Met) (with W-102) cross-link spans 224-250 (YVNPVGPHGNPDPLLAANDIRMSFGRM). Residue histidine 265 coordinates heme b.

Belongs to the peroxidase family. Peroxidase/catalase subfamily. Homodimer or homotetramer. The cofactor is heme b. In terms of processing, formation of the three residue Trp-Tyr-Met cross-link is important for the catalase, but not the peroxidase activity of the enzyme.

The enzyme catalyses H2O2 + AH2 = A + 2 H2O. It carries out the reaction 2 H2O2 = O2 + 2 H2O. In terms of biological role, bifunctional enzyme with both catalase and broad-spectrum peroxidase activity. In Shewanella woodyi (strain ATCC 51908 / MS32), this protein is Catalase-peroxidase.